Reading from the N-terminus, the 199-residue chain is MNVGIIGFQGDVEEHIAIVKKISRRRKGINVLRIRRKEDLDRSDSLIIPGGESTTIYKLISEYGIYDEIIRRAKEGMPVMATCAGLILISKDTNDDRVPGMNLLDVTIMRNAYGRQVNSFETDIDIKGIGTFHAVFIRAPRIKEYGNVDVMASLDGYPVMVRSGNILGMTFHPELTGDVSIHEYFLSMGGGGYISTATG.

51–53 (GES) provides a ligand contact to L-glutamine. The active-site Nucleophile is the Cys-83. L-glutamine is bound by residues Arg-110 and 137–138 (IR). Catalysis depends on charge relay system residues His-172 and Glu-174.

It belongs to the glutaminase PdxT/SNO family. As to quaternary structure, in the presence of PdxS, forms a dodecamer of heterodimers. Only shows activity in the heterodimer.

The catalysed reaction is aldehydo-D-ribose 5-phosphate + D-glyceraldehyde 3-phosphate + L-glutamine = pyridoxal 5'-phosphate + L-glutamate + phosphate + 3 H2O + H(+). The enzyme catalyses L-glutamine + H2O = L-glutamate + NH4(+). It functions in the pathway cofactor biosynthesis; pyridoxal 5'-phosphate biosynthesis. Its function is as follows. Catalyzes the hydrolysis of glutamine to glutamate and ammonia as part of the biosynthesis of pyridoxal 5'-phosphate. The resulting ammonia molecule is channeled to the active site of PdxS. The polypeptide is Pyridoxal 5'-phosphate synthase subunit PdxT (Thermoplasma volcanium (strain ATCC 51530 / DSM 4299 / JCM 9571 / NBRC 15438 / GSS1)).